Reading from the N-terminus, the 363-residue chain is NAD(P)H-quinone oxidoreductase subunit 1, chloroplastic (363 aa).

6 helical membrane-spanning segments follow: residues 28–48 (WVFV…LAIV), 98–118 (FSFG…VIPF), 129–149 (IGVF…LMSG), 253–273 (FGLF…FVTV), 300–320 (VFVT…FIFV), and 336–356 (LLNL…LLTT).

It belongs to the complex I subunit 1 family. In terms of assembly, NDH is composed of at least 16 different subunits, 5 of which are encoded in the nucleus.

The protein localises to the plastid. It localises to the chloroplast thylakoid membrane. It carries out the reaction a plastoquinone + NADH + (n+1) H(+)(in) = a plastoquinol + NAD(+) + n H(+)(out). The catalysed reaction is a plastoquinone + NADPH + (n+1) H(+)(in) = a plastoquinol + NADP(+) + n H(+)(out). In terms of biological role, NDH shuttles electrons from NAD(P)H:plastoquinone, via FMN and iron-sulfur (Fe-S) centers, to quinones in the photosynthetic chain and possibly in a chloroplast respiratory chain. The immediate electron acceptor for the enzyme in this species is believed to be plastoquinone. Couples the redox reaction to proton translocation, and thus conserves the redox energy in a proton gradient. The protein is NAD(P)H-quinone oxidoreductase subunit 1, chloroplastic of Phaseolus vulgaris (Kidney bean).